We begin with the raw amino-acid sequence, 305 residues long: MKDKVNVATSTFNHTPVLANELIEIIKKLPEDLIKNCLIIDATIGGGGHSSLVLETFPGISVIGLDQDPKAVAAASEHLKIFGDRAKIETTNFSNFTPSKKVAMVFADLGVSSPQLDEGSRGFSFRLNGPLDMRMNQIDGTNAAELIDRLSENELANLIFKYGEERFSRRIAKRIKHDLAKQGPYSGTIALAYAIAGCYPPKLRNRRVHPATKTFQALRIAINHELDVLSVLLKKAPEWLLDDGLFAVISFHSLEDRLVKKSFLTDTRLERITRKPLIATTNEISINPRSRSAKMRVARRIEAIK.

Residues 47-49, Asp-66, Phe-93, Asp-108, and Gln-115 each bind S-adenosyl-L-methionine; that span reads GGH.

The protein belongs to the methyltransferase superfamily. RsmH family.

The protein resides in the cytoplasm. The enzyme catalyses cytidine(1402) in 16S rRNA + S-adenosyl-L-methionine = N(4)-methylcytidine(1402) in 16S rRNA + S-adenosyl-L-homocysteine + H(+). In terms of biological role, specifically methylates the N4 position of cytidine in position 1402 (C1402) of 16S rRNA. The chain is Ribosomal RNA small subunit methyltransferase H from Prochlorococcus marinus (strain MIT 9211).